A 189-amino-acid chain; its full sequence is Probable thymidylate kinase 1 (189 aa).

9–16 serves as a coordination point for ATP; that stretch reads GIDGSGKT.

The protein belongs to the thymidylate kinase family.

It catalyses the reaction dTMP + ATP = dTDP + ADP. The sequence is that of Probable thymidylate kinase 1 (tmk1) from Saccharolobus solfataricus (strain ATCC 35092 / DSM 1617 / JCM 11322 / P2) (Sulfolobus solfataricus).